The chain runs to 420 residues: Protein translocase subunit SecF (420 aa).

Transmembrane regions (helical) follow at residues 7–27 (FSLL…AGVL), 250–270 (LLVR…FLYV), 276–296 (WFFA…MVSF), 309–327 (IAAI…VVVF), 358–378 (VVTT…TEGG), and 388–408 (VGMV…IALI).

This sequence belongs to the SecD/SecF family. SecF subfamily. In terms of assembly, forms a complex with SecD. Part of the essential Sec protein translocation apparatus which comprises SecA, SecYEG and auxiliary proteins SecDF. Other proteins may also be involved.

The protein resides in the cell inner membrane. Functionally, part of the Sec protein translocase complex. Interacts with the SecYEG preprotein conducting channel. SecDF uses the proton motive force (PMF) to complete protein translocation after the ATP-dependent function of SecA. The polypeptide is Protein translocase subunit SecF (Treponema pallidum (strain Nichols)).